The following is a 361-amino-acid chain: Peptidyl-prolyl cis-trans isomerase CYP40 (361 aa).

Positions 7–172 constitute a PPIase cyclophilin-type domain; sequence FMDISIGGEL…QDVVIHDCGE (166 aa). 2 TPR repeats span residues 212 to 245 and 298 to 331; these read VDFV…LDIC and VKAL…EPND.

This sequence belongs to the cyclophilin-type PPIase family. In terms of tissue distribution, expressed at low levels in seedlings, roots, shoots, leaves, stems, inflorescences, flowers and siliques, with highest levels dividing tissues.

It localises to the cytoplasm. The enzyme catalyses [protein]-peptidylproline (omega=180) = [protein]-peptidylproline (omega=0). Its activity is regulated as follows. Binds cyclosporin A (CsA). CsA mediates some of its effects via an inhibitory action on PPIase. Functionally, PPIases accelerate the folding of proteins. It catalyzes the cis-trans isomerization of proline imidic peptide bonds in oligopeptides. Involved in promoting the expression of the juvenile phase of vegetative development, and, to a lower extent, in regulating the positioning of floral buds, floral morphogenesis and the expression of HSPs. Collaboratively with RBL and ULT1, influences floral meristem (FM) determinacy in an AGAMOUS and SUPERMAN-dependent manner, thus contributing to the floral developmental homeostasis. The protein is Peptidyl-prolyl cis-trans isomerase CYP40 of Arabidopsis thaliana (Mouse-ear cress).